A 333-amino-acid polypeptide reads, in one-letter code: Terpene synthase 2 (333 aa).

Positions 82–87 (DDDLDT) match the DDxx(x)D/E motif motif. An NDxxSxxxD/E motif motif is present at residues 219–227 (NDCVSYAKE).

It belongs to the terpene synthase family.

It catalyses the reaction (2E,6E)-farnesyl diphosphate = (E)-beta-farnesene + diphosphate. The enzyme catalyses (2E,6E)-farnesyl diphosphate = (1S,2S,4R)-beta-elemene + diphosphate. In terms of biological role, terpene synthase that converts its substrate farnesyl diphosphate (FPP) into the sesquiterpene (E)-beta-farnesene as major product. Is also able to convert FPP into delta-elemene, beta-elemene, (E)-beta-caryophyllene, 9-epi-(E)-caryophyllene, and a yet unidentified sesquiterpene. The sequence is that of Terpene synthase 2 from Dictyostelium purpureum (Slime mold).